A 797-amino-acid polypeptide reads, in one-letter code: Trafficking protein particle complex subunit 12 (797 aa).

Disordered regions lie at residues M1–S257 and S286–S338. Positions Q9–E23 are enriched in low complexity. A compositionally biased stretch (basic and acidic residues) spans M29 to T43. The segment covering G47 to P58 has biased composition (acidic residues). Basic and acidic residues-rich tracts occupy residues F66–M75 and A107–V121. 2 positions are modified to phosphoserine: S125 and S128. T130 is subject to Phosphothreonine. The span at V173–Q185 shows a compositional bias: basic and acidic residues. The segment covering I206–Q216 has biased composition (polar residues). Positions S232–K244 are enriched in low complexity. Phosphoserine occurs at positions 234, 309, and 314. 4 TPR repeats span residues G607–Q640, P642–L675, I682–N715, and A716–H749.

In terms of assembly, component of the multisubunit TRAPP (transport protein particle) complex, which includes at least TRAPPC2, TRAPPC2L, TRAPPC3, TRAPPC3L, TRAPPC4, TRAPPC5, TRAPPC8, TRAPPC9, TRAPPC10, TRAPPC11 and TRAPPC12. Interacts with CENPE. Phosphorylated as the cells enter mitosis but is dephosphorylated at or before the onset of anaphase. The phosphorylated form recruits CENPE to kinetochores more efficiently than the non-phosphorylated form.

The protein resides in the endoplasmic reticulum-Golgi intermediate compartment. Its subcellular location is the nucleus. In terms of biological role, component of the TRAPP complex, which is involved in endoplasmic reticulum to Golgi apparatus trafficking at a very early stage. Also plays a role in chromosome congression, kinetochore assembly and stability and controls the recruitment of CENPE to the kinetochores. The chain is Trafficking protein particle complex subunit 12 from Mus musculus (Mouse).